The sequence spans 435 residues: GTPase Der (435 aa).

2 consecutive EngA-type G domains span residues 3-167 and 176-351; these read NIVA…KDEG and PRIA…ENRG. GTP contacts are provided by residues 9-16, 56-60, 119-122, 182-189, 229-233, and 294-297; these read GRPNVGKS, DTGGY, NKSD, GRPNAGKS, DTAGI, and NKWD. Residues 352–435 enclose the KH-like domain; the sequence is KRIPTSELND…VPISIVYRKK (84 aa).

The protein belongs to the TRAFAC class TrmE-Era-EngA-EngB-Septin-like GTPase superfamily. EngA (Der) GTPase family. As to quaternary structure, associates with the 50S ribosomal subunit.

Functionally, GTPase that plays an essential role in the late steps of ribosome biogenesis. In Cytophaga hutchinsonii (strain ATCC 33406 / DSM 1761 / CIP 103989 / NBRC 15051 / NCIMB 9469 / D465), this protein is GTPase Der.